Reading from the N-terminus, the 515-residue chain is Bifunctional purine biosynthesis protein PurH (515 aa).

In terms of domain architecture, MGS-like spans 1 to 145 (MTKRALISVS…KNHASVTVVV (145 aa)).

Belongs to the PurH family.

It catalyses the reaction (6R)-10-formyltetrahydrofolate + 5-amino-1-(5-phospho-beta-D-ribosyl)imidazole-4-carboxamide = 5-formamido-1-(5-phospho-D-ribosyl)imidazole-4-carboxamide + (6S)-5,6,7,8-tetrahydrofolate. The catalysed reaction is IMP + H2O = 5-formamido-1-(5-phospho-D-ribosyl)imidazole-4-carboxamide. It participates in purine metabolism; IMP biosynthesis via de novo pathway; 5-formamido-1-(5-phospho-D-ribosyl)imidazole-4-carboxamide from 5-amino-1-(5-phospho-D-ribosyl)imidazole-4-carboxamide (10-formyl THF route): step 1/1. It functions in the pathway purine metabolism; IMP biosynthesis via de novo pathway; IMP from 5-formamido-1-(5-phospho-D-ribosyl)imidazole-4-carboxamide: step 1/1. The protein is Bifunctional purine biosynthesis protein PurH of Streptococcus pyogenes serotype M2 (strain MGAS10270).